The sequence spans 300 residues: 33 kDa chaperonin (300 aa).

Disulfide bonds link Cys-235–Cys-237 and Cys-269–Cys-272.

The protein belongs to the HSP33 family. Post-translationally, under oxidizing conditions two disulfide bonds are formed involving the reactive cysteines. Under reducing conditions zinc is bound to the reactive cysteines and the protein is inactive.

The protein localises to the cytoplasm. Its function is as follows. Redox regulated molecular chaperone. Protects both thermally unfolding and oxidatively damaged proteins from irreversible aggregation. Plays an important role in the bacterial defense system toward oxidative stress. The polypeptide is 33 kDa chaperonin (Pseudomonas fluorescens (strain Pf0-1)).